The following is a 201-amino-acid chain: Small ribosomal subunit protein uS4c (201 aa).

The tract at residues 20–43 (GLTSKRPRAGSDLRNQSRSGKRSQ) is disordered. Positions 89 to 149 (MRLDNILFRL…DEQKSRALIQ (61 aa)) constitute an S4 RNA-binding domain.

Belongs to the universal ribosomal protein uS4 family. Part of the 30S ribosomal subunit. Contacts protein S5. The interaction surface between S4 and S5 is involved in control of translational fidelity.

Its subcellular location is the plastid. The protein resides in the chloroplast. In terms of biological role, one of the primary rRNA binding proteins, it binds directly to 16S rRNA where it nucleates assembly of the body of the 30S subunit. Functionally, with S5 and S12 plays an important role in translational accuracy. The sequence is that of Small ribosomal subunit protein uS4c (rps4) from Buxus microphylla (Littleleaf boxwood).